A 313-amino-acid polypeptide reads, in one-letter code: Small ribosomal subunit protein uS2 (313 aa).

Basic and acidic residues predominate over residues 228–256 (RQEDKAAEAQDKDAQDTEDNKGARPRGAE). Positions 228–313 (RQEDKAAEAQ…VSKAGDKPKK (86 aa)) are disordered.

The protein belongs to the universal ribosomal protein uS2 family.

This Amoebophilus asiaticus (strain 5a2) protein is Small ribosomal subunit protein uS2.